The sequence spans 134 residues: Phosphoribosyl-AMP cyclohydrolase (134 aa).

Mg(2+) is bound at residue Asp-80. Cys-81 lines the Zn(2+) pocket. Positions 82 and 84 each coordinate Mg(2+). Zn(2+)-binding residues include Cys-98 and Cys-105.

The protein belongs to the PRA-CH family. As to quaternary structure, homodimer. The cofactor is Mg(2+). Zn(2+) serves as cofactor.

Its subcellular location is the cytoplasm. It carries out the reaction 1-(5-phospho-beta-D-ribosyl)-5'-AMP + H2O = 1-(5-phospho-beta-D-ribosyl)-5-[(5-phospho-beta-D-ribosylamino)methylideneamino]imidazole-4-carboxamide. Its pathway is amino-acid biosynthesis; L-histidine biosynthesis; L-histidine from 5-phospho-alpha-D-ribose 1-diphosphate: step 3/9. Catalyzes the hydrolysis of the adenine ring of phosphoribosyl-AMP. This chain is Phosphoribosyl-AMP cyclohydrolase, found in Bordetella bronchiseptica (strain ATCC BAA-588 / NCTC 13252 / RB50) (Alcaligenes bronchisepticus).